Reading from the N-terminus, the 25-residue chain is Large ribosomal subunit protein uL30 (25 aa).

It belongs to the universal ribosomal protein uL30 family. As to quaternary structure, part of the 50S ribosomal subunit.

The chain is Large ribosomal subunit protein uL30 (rpmD) from Pseudomonas putida (Arthrobacter siderocapsulatus).